Consider the following 429-residue polypeptide: Adenylosuccinate synthetase (429 aa).

GTP-binding positions include 12-18 (GDEGKGK) and 40-42 (GHT). Asp13 serves as the catalytic Proton acceptor. Mg(2+)-binding residues include Asp13 and Gly40. Residues 13 to 16 (DEGK), 38 to 41 (NAGH), Thr128, Arg142, Gln223, Thr238, and Arg302 contribute to the IMP site. His41 serves as the catalytic Proton donor. 298-304 (TVTGRPR) provides a ligand contact to substrate. GTP contacts are provided by residues Arg304, 330–332 (LLD), and 412–414 (SVG).

It belongs to the adenylosuccinate synthetase family. Homodimer. Requires Mg(2+) as cofactor.

The protein resides in the cytoplasm. The catalysed reaction is IMP + L-aspartate + GTP = N(6)-(1,2-dicarboxyethyl)-AMP + GDP + phosphate + 2 H(+). It functions in the pathway purine metabolism; AMP biosynthesis via de novo pathway; AMP from IMP: step 1/2. In terms of biological role, plays an important role in the de novo pathway of purine nucleotide biosynthesis. Catalyzes the first committed step in the biosynthesis of AMP from IMP. The chain is Adenylosuccinate synthetase from Lactobacillus johnsonii (strain CNCM I-12250 / La1 / NCC 533).